The primary structure comprises 958 residues: Valine--tRNA ligase (958 aa).

The 'HIGH' region signature appears at 42–52 (PNVTGSLHMGH). The 'KMSKS' region signature appears at 554–558 (KMSKS). An ATP-binding site is contributed by lysine 557. Positions 887-956 (LVDVAAEMAR…TEQKAEFAKL (70 aa)) form a coiled coil.

Belongs to the class-I aminoacyl-tRNA synthetase family. ValS type 1 subfamily. As to quaternary structure, monomer.

Its subcellular location is the cytoplasm. It carries out the reaction tRNA(Val) + L-valine + ATP = L-valyl-tRNA(Val) + AMP + diphosphate. Catalyzes the attachment of valine to tRNA(Val). As ValRS can inadvertently accommodate and process structurally similar amino acids such as threonine, to avoid such errors, it has a 'posttransfer' editing activity that hydrolyzes mischarged Thr-tRNA(Val) in a tRNA-dependent manner. The chain is Valine--tRNA ligase from Shewanella oneidensis (strain ATCC 700550 / JCM 31522 / CIP 106686 / LMG 19005 / NCIMB 14063 / MR-1).